The primary structure comprises 478 residues: Dihydrolipoyl dehydrogenase (478 aa).

FAD is bound by residues 36–45, Lys54, and Ala117; that span reads ERYSTLGGVC. Cys45 and Cys50 are oxidised to a cystine. NAD(+)-binding positions include 183 to 187, Glu206, Val239, and 270 to 273; these read GGGII and AIGR. Positions 313 and 321 each coordinate FAD. The active-site Proton acceptor is His445.

Belongs to the class-I pyridine nucleotide-disulfide oxidoreductase family. As to quaternary structure, homodimer. The cofactor is FAD.

It localises to the cytoplasm. It carries out the reaction N(6)-[(R)-dihydrolipoyl]-L-lysyl-[protein] + NAD(+) = N(6)-[(R)-lipoyl]-L-lysyl-[protein] + NADH + H(+). Lipoamide dehydrogenase is a component of the alpha-ketoacid dehydrogenase complexes. The protein is Dihydrolipoyl dehydrogenase (lpdA) of Haemophilus influenzae (strain ATCC 51907 / DSM 11121 / KW20 / Rd).